A 468-amino-acid polypeptide reads, in one-letter code: Tapasin-related protein (468 aa).

A signal peptide spans 1–18; sequence MGTQEGWCLLLCLALSGA. Residues 19-405 are Lumenal-facing; it reads AETKPHPAER…STQVVPPERR (387 aa). Positions 181–297 constitute an Ig-like V-type domain; sequence PQGTVRTAVE…SLYRAQQIIQ (117 aa). 2 cysteine pairs are disulfide-bonded: C212-C283 and C321-C382. N-linked (GlcNAc...) asparagine glycosylation occurs at N265. Positions 304-394 constitute an Ig-like C1-type domain; sequence PKVRLSLANE…MHISLEEPLG (91 aa). Residues 406–426 traverse the membrane as a helical segment; sequence TALGVIFASSLFLLALLFLGL. At 427-468 the chain is on the cytoplasmic side; the sequence is QRRQAPTRVGLLQAERWKTTSCADTQSSHLHEDRTACVSQPS.

Interacts with peptide-free HLA-A*02-B2M complexes or those loaded with low affinity peptides, likely facilitating peptide exchange onto higher affinity peptides. Interacts with MR1 in a ligand-independent way; this interaction may stabilize MR1 pool and facilitate ligand loading and dissociation.

The protein resides in the cell membrane. It localises to the endoplasmic reticulum membrane. It is found in the microsome membrane. Its subcellular location is the golgi apparatus membrane. Its function is as follows. Component of the antigen processing and presentation pathway, which binds to MHC class I coupled with beta2-microglobulin/B2M. Association between TAPBPR and MHC class I occurs in the absence of a functional peptide-loading complex (PLC). Expression seems to slow down and down-regulate MHC class I surface expression. The chain is Tapasin-related protein (TAPBPL) from Pongo abelii (Sumatran orangutan).